The sequence spans 195 residues: Flavin-dependent monooxygenase, reductase subunit HsaB (195 aa).

Residues proline 42–alanine 46, glutamine 48–serine 49, cysteine 63–threonine 65, arginine 69–serine 70, and arginine 95–phenylalanine 96 each bind FAD. Phenylalanine 160–glycine 163 contacts NAD(+).

The protein belongs to the non-flavoprotein flavin reductase family. As to quaternary structure, hsaAB monooxygenase consists of an oxygenase component HsaA and a reductase component HsaB.

It carries out the reaction a reduced flavin + NAD(+) = an oxidized flavin + NADH + 2 H(+). It functions in the pathway lipid metabolism; steroid biosynthesis. Catalyzes the reduction of free flavins (FMN or FAD) by NADH. Subsequently, the reduced flavins diffuse to the HsaA oxygenase subunit. The chain is Flavin-dependent monooxygenase, reductase subunit HsaB (hsaB) from Rhodococcus jostii (strain RHA1).